A 132-amino-acid polypeptide reads, in one-letter code: Small ribosomal subunit protein uS8 (132 aa).

This sequence belongs to the universal ribosomal protein uS8 family. Part of the 30S ribosomal subunit. Contacts proteins S5 and S12.

Its function is as follows. One of the primary rRNA binding proteins, it binds directly to 16S rRNA central domain where it helps coordinate assembly of the platform of the 30S subunit. This is Small ribosomal subunit protein uS8 from Xanthomonas axonopodis pv. citri (strain 306).